We begin with the raw amino-acid sequence, 496 residues long: Squalene epoxidase ERG1 (496 aa).

The Cytoplasmic segment spans residues 1–16 (MSAVNVAPELINADNT). Residues 17 to 37 (ITYDAIVIGAGVIGPCVATGL) form a helical membrane-spanning segment. Residues 28–29 (VI), 48–49 (ER), R56, and R158 each bind FAD. At 38–474 (ARKGKKVLIV…FLGLPMALLE (437 aa)) the chain is on the lumenal side. Glycyl lysine isopeptide (Lys-Gly) (interchain with G-Cter in ubiquitin) cross-links involve residues K284, K289, and K311. The FAD site is built by D335 and M348. A helical membrane pass occupies residues 475–495 (GIMILITAIRVFTPFLFGELI). A topological domain (cytoplasmic) is located at residue G496.

The protein belongs to the squalene monooxygenase family. Interacts with ERG28. The cofactor is FAD.

The protein resides in the microsome membrane. It localises to the endoplasmic reticulum membrane. Its subcellular location is the lipid droplet. The catalysed reaction is squalene + reduced [NADPH--hemoprotein reductase] + O2 = (S)-2,3-epoxysqualene + oxidized [NADPH--hemoprotein reductase] + H2O + H(+). The protein operates within terpene metabolism; lanosterol biosynthesis; lanosterol from farnesyl diphosphate: step 2/3. Inhibited by the allylamine antimycotic drugs. Squalene epoxidase; part of the third module of ergosterol biosynthesis pathway that includes the late steps of the pathway. ERG1 catalyzes the epoxidation of squalene into 2,3-epoxysqualene. The third module or late pathway involves the ergosterol synthesis itself through consecutive reactions that mainly occur in the endoplasmic reticulum (ER) membrane. Firstly, the squalene synthase ERG9 catalyzes the condensation of 2 farnesyl pyrophosphate moieties to form squalene, which is the precursor of all steroids. Squalene synthase is crucial for balancing the incorporation of farnesyl diphosphate (FPP) into sterol and nonsterol isoprene synthesis. Secondly, the squalene epoxidase ERG1 catalyzes the stereospecific oxidation of squalene to (S)-2,3-epoxysqualene, which is considered to be a rate-limiting enzyme in steroid biosynthesis. Then, the lanosterol synthase ERG7 catalyzes the cyclization of (S)-2,3 oxidosqualene to lanosterol, a reaction that forms the sterol core. In the next steps, lanosterol is transformed to zymosterol through a complex process involving various demethylation, reduction and desaturation reactions. The lanosterol 14-alpha-demethylase ERG11 (also known as CYP51) catalyzes C14-demethylation of lanosterol to produce 4,4'-dimethyl cholesta-8,14,24-triene-3-beta-ol, which is critical for ergosterol biosynthesis. The C-14 reductase ERG24 reduces the C14=C15 double bond of 4,4-dimethyl-cholesta-8,14,24-trienol to produce 4,4-dimethyl-cholesta-8,24-dienol. 4,4-dimethyl-cholesta-8,24-dienol is substrate of the C-4 demethylation complex ERG25-ERG26-ERG27 in which ERG25 catalyzes the three-step monooxygenation required for the demethylation of 4,4-dimethyl and 4alpha-methylsterols, ERG26 catalyzes the oxidative decarboxylation that results in a reduction of the 3-beta-hydroxy group at the C-3 carbon to an oxo group, and ERG27 is responsible for the reduction of the keto group on the C-3. ERG28 has a role as a scaffold to help anchor ERG25, ERG26 and ERG27 to the endoplasmic reticulum and ERG29 regulates the activity of the iron-containing C4-methylsterol oxidase ERG25. Then, the sterol 24-C-methyltransferase ERG6 catalyzes the methyl transfer from S-adenosyl-methionine to the C-24 of zymosterol to form fecosterol. The C-8 sterol isomerase ERG2 catalyzes the reaction which results in unsaturation at C-7 in the B ring of sterols and thus converts fecosterol to episterol. The sterol-C5-desaturase ERG3 then catalyzes the introduction of a C-5 double bond in the B ring to produce 5-dehydroepisterol. The C-22 sterol desaturase ERG5 further converts 5-dehydroepisterol into ergosta-5,7,22,24(28)-tetraen-3beta-ol by forming the C-22(23) double bond in the sterol side chain. Finally, ergosta-5,7,22,24(28)-tetraen-3beta-ol is substrate of the C-24(28) sterol reductase ERG4 to produce ergosterol. This chain is Squalene epoxidase ERG1, found in Saccharomyces cerevisiae (strain ATCC 204508 / S288c) (Baker's yeast).